An 89-amino-acid chain; its full sequence is Repressor protein (89 aa).

Residues 29–52 constitute a DNA-binding region (H-T-H motif); it reads SGDIARNTGYSRRRISDRCTVLVD.

In terms of biological role, transcriptional repressor expressed under lysogenic conditions, which specifically binds the host DNA site 'RRGAAG'. The binding occurs cooperatively, probably as 2 copies of a dimer. Possibly prevents RNA polymerase access to the promoters for lytic cell cycle transcription. The protein is Repressor protein (T6) of Halobacterium salinarum (Halobacterium halobium).